Consider the following 264-residue polypeptide: S-adenosylmethionine decarboxylase proenzyme (264 aa).

The active-site Schiff-base intermediate with substrate; via pyruvic acid is Ser-113. A Pyruvic acid (Ser); by autocatalysis modification is found at Ser-113. His-118 functions as the Proton acceptor; for processing activity in the catalytic mechanism. Cys-141 (proton donor; for catalytic activity) is an active-site residue.

This sequence belongs to the prokaryotic AdoMetDC family. Type 2 subfamily. Heterooctamer of four alpha and four beta chains arranged as a tetramer of alpha/beta heterodimers. The cofactor is pyruvate. Post-translationally, is synthesized initially as an inactive proenzyme. Formation of the active enzyme involves a self-maturation process in which the active site pyruvoyl group is generated from an internal serine residue via an autocatalytic post-translational modification. Two non-identical subunits are generated from the proenzyme in this reaction, and the pyruvate is formed at the N-terminus of the alpha chain, which is derived from the carboxyl end of the proenzyme. The post-translation cleavage follows an unusual pathway, termed non-hydrolytic serinolysis, in which the side chain hydroxyl group of the serine supplies its oxygen atom to form the C-terminus of the beta chain, while the remainder of the serine residue undergoes an oxidative deamination to produce ammonia and the pyruvoyl group blocking the N-terminus of the alpha chain.

It carries out the reaction S-adenosyl-L-methionine + H(+) = S-adenosyl 3-(methylsulfanyl)propylamine + CO2. The protein operates within amine and polyamine biosynthesis; S-adenosylmethioninamine biosynthesis; S-adenosylmethioninamine from S-adenosyl-L-methionine: step 1/1. In terms of biological role, catalyzes the decarboxylation of S-adenosylmethionine to S-adenosylmethioninamine (dcAdoMet), the propylamine donor required for the synthesis of the polyamines spermine and spermidine from the diamine putrescine. The protein is S-adenosylmethionine decarboxylase proenzyme of Xanthomonas campestris pv. campestris (strain B100).